A 294-amino-acid chain; its full sequence is Cytidine deaminase (294 aa).

CMP/dCMP-type deaminase domains follow at residues Asp48–Lys168 and Leu186–Ala294. Substrate is bound at residue Asn89–Glu91. His102 lines the Zn(2+) pocket. The active-site Proton donor is Glu104. Zn(2+) is bound by residues Cys129 and Cys132.

Belongs to the cytidine and deoxycytidylate deaminase family. Homodimer. Zn(2+) serves as cofactor.

It carries out the reaction cytidine + H2O + H(+) = uridine + NH4(+). It catalyses the reaction 2'-deoxycytidine + H2O + H(+) = 2'-deoxyuridine + NH4(+). This enzyme scavenges exogenous and endogenous cytidine and 2'-deoxycytidine for UMP synthesis. This chain is Cytidine deaminase, found in Escherichia coli O139:H28 (strain E24377A / ETEC).